The sequence spans 200 residues: Outer-membrane lipoprotein carrier protein (200 aa).

The signal sequence occupies residues 1–18; that stretch reads MIGLFLAAPLVLSSAVWA.

This sequence belongs to the LolA family. In terms of assembly, monomer.

Its subcellular location is the periplasm. Participates in the translocation of lipoproteins from the inner membrane to the outer membrane. Only forms a complex with a lipoprotein if the residue after the N-terminal Cys is not an aspartate (The Asp acts as a targeting signal to indicate that the lipoprotein should stay in the inner membrane). The chain is Outer-membrane lipoprotein carrier protein from Photobacterium profundum (strain SS9).